A 468-amino-acid chain; its full sequence is FAD-linked oxidoreductase azaG (468 aa).

Positions 1 to 16 (MQLSGILSWLLSWLWA) are cleaved as a signal peptide. Asn44 carries N-linked (GlcNAc...) asparagine glycosylation. One can recognise an FAD-binding PCMH-type domain in the interval 54–228 (TVHGAPHYLG…TSATYRTHQA (175 aa)). Asn272, Asn348, and Asn464 each carry an N-linked (GlcNAc...) asparagine glycan.

The protein belongs to the oxygen-dependent FAD-linked oxidoreductase family. The cofactor is FAD.

It participates in secondary metabolite biosynthesis. Its function is as follows. FAD-linked oxidoreductase; part of the gene cluster that mediates the biosynthesis of azaphilones, a class of fungal metabolites characterized by a highly oxygenated pyrano-quinone bicyclic core and exhibiting a broad range of bioactivities. In the first step, the non-reducing polyketide synthase azaA forms the hexaketide precursor from successive condensations of five malonyl-CoA units, presumably with a simple acetyl-CoA starter unit. The reactive polyketide chain then undergoes a PT-mediated C2-C7 cyclization to afford the aromatic ring and is eventually released as an aldehyde through the R-domain. The putative ketoreductase azaE is proposed to catalyze the reduction of the terminal ketone resulting in the early culture product FK17-P2a. The monooxygenase azaH was demonstrated to be the only enzyme required to convert FK17-P2a to azanigerone E. AzaH first hydroxylates the benzaldehyde intermediate FK17-P2a at C4, which triggers the formation of the pyran-ring to afford azanigerone E. In parallel, the 2,4-dimethylhexanoyl chain is synthesized by the HR-PKS azaB and is proposed to be transferred to the C4-hydroxyl of azanigerone E by the acyltransferase azaD directly from the ACP domain of azaB. Alternatively, the 2,4-dimethyl-hexanoyl chain may be offloaded from the HR-PKS as a carboxylic acid and converted to an acyl-CoA by azaF. The resulting acyl-CoA molecule could then be taken up as a substrate by AzaD to form azanigerone B. To yield the carboxylic acid substituent in azanigerone A, the hydroxypropyl side chain of azanigerone B would need to undergo a C-C oxidative cleavage catalyzed by cytochrome P450 AzaI. AzaI is proposed to act on a vicinal diol that leads to a C-C bond scission either through an alkoxyradical intermediate or a peroxy complex. In the biosynthesis of azanigerone A, azanigerone B first undergoes hydroxylation at C10, possibly catalyzed by one of the two FAD-dependent monooxygenases encoded in the cluster, azaG or azaL, resulting in the vicinal diol azanigerone C. Oxidative cleavage of azanigerone C by azaI would yield the corresponding aldehyde derivative of azanigerone A. Finally, the dehydrogenase azaJ is proposed to convert the aldehyde functional group into the carboxylic acid, completing the conversion from azanigerone B to azanigerone A. Alternatively, the oxidation of aldehyde to carboxylic acid may be catalyzed by the same P450 enzyme azaI via consecutive oxidation or by endogenous alcohol dehydrogenase. This Aspergillus niger (strain ATCC 1015 / CBS 113.46 / FGSC A1144 / LSHB Ac4 / NCTC 3858a / NRRL 328 / USDA 3528.7) protein is FAD-linked oxidoreductase azaG.